A 314-amino-acid polypeptide reads, in one-letter code: Ribonuclease Z (314 aa).

Residues histidine 60, histidine 62, aspartate 64, histidine 65, histidine 140, aspartate 209, and histidine 269 each contribute to the Zn(2+) site. The Proton acceptor role is filled by aspartate 64.

This sequence belongs to the RNase Z family. As to quaternary structure, homodimer. Requires Zn(2+) as cofactor.

The enzyme catalyses Endonucleolytic cleavage of RNA, removing extra 3' nucleotides from tRNA precursor, generating 3' termini of tRNAs. A 3'-hydroxy group is left at the tRNA terminus and a 5'-phosphoryl group is left at the trailer molecule.. Zinc phosphodiesterase, which displays some tRNA 3'-processing endonuclease activity. Probably involved in tRNA maturation, by removing a 3'-trailer from precursor tRNA. The chain is Ribonuclease Z from Methanococcus maripaludis (strain C5 / ATCC BAA-1333).